The following is a 166-amino-acid chain: Small ribosomal subunit protein uS5 (166 aa).

The S5 DRBM domain occupies 11 to 74; the sequence is LQEKLIAVNR…EKARRNMINV (64 aa).

It belongs to the universal ribosomal protein uS5 family. In terms of assembly, part of the 30S ribosomal subunit. Contacts proteins S4 and S8.

With S4 and S12 plays an important role in translational accuracy. In terms of biological role, located at the back of the 30S subunit body where it stabilizes the conformation of the head with respect to the body. This chain is Small ribosomal subunit protein uS5, found in Haemophilus influenzae (strain 86-028NP).